An 874-amino-acid polypeptide reads, in one-letter code: Mannuronan C5-epimerase AlgE6 (874 aa).

PbH1 repeat units follow at residues 133–155, 157–179, 180–202, 204–226, 234–256, 257–279, 280–302, and 320–351; these read DRNVTIERVEVREMSGYGFDPHE, TINLVLRDSVAHHNGLDGFVADY, QIGGTFENNVAYANDRHGFNIVT, TNDFVMRNNVAYGNGGNGLVVQR, PENILIDGGSYYDNGLEGVLVKM, SNNVTVQNADIHGNGSSGVRVYG, AQGVQILGNQIHDNAKTAVAPEV, and TLNTRVEGNTITGSANSTYGVQERNDGTDFSS. Hemolysin-type calcium-binding repeat units follow at residues 383–394, 401–417, 419–435, 562–578, 580–596, 723–739, and 741–757; these read GTDGNDVLIGSD, GGAGDDRLDGGAGDDLL, GGAGRDRLTGGLGADTF, GGGGADQLYGYGGGDLL, GGAGRDRLTGGEGADTF, GGGGADQLYGYAGNDLL, and GGAGRDKLSGGEGADTF. The interval 401 to 420 is disordered; the sequence is GGAGDDRLDGGAGDDLLDGG.

Belongs to the D-mannuronate C5-epimerase family. Ca(2+) serves as cofactor.

Its subcellular location is the secreted. The enzyme catalyses [(1-&gt;4)-beta-D-mannuronosyl](n) = [alginate](n). It functions in the pathway glycan biosynthesis; alginate biosynthesis. Its activity is regulated as follows. Inhibited by zinc. Converts beta-D-mannuronic acid (M) to alpha-L-guluronic acid (G), producing a polymer with gel-forming capacity, required for the formation of the cyst coat. The protein is Mannuronan C5-epimerase AlgE6 of Azotobacter vinelandii.